Here is a 487-residue protein sequence, read N- to C-terminus: NADH-quinone oxidoreductase subunit N (487 aa).

Transmembrane regions (helical) follow at residues 9-29 (PVLPEIFMAVAGLALLMLGVF), 38-58 (VSVLVILALGAAMVLVSSLGG), 73-93 (FAGFAKGLVLVASAIATAMSL), 108-128 (VLVLFATLGMMMMISANDFIA), 161-181 (FVLGSLASGLLLYGISLLYGF), 208-228 (IIAGLVFVLAGLSFKVSAVPF), 240-260 (PTPVTSFFAVAPKIAALCLLV), 277-297 (VVTFIAIGSMFVGSFAAVVQT), 306-326 (SSIGHVGFVLVGIAAGSTLGI), 328-348 (GVLIYLAIYLFMNVGAFAVIL), 374-394 (AFVMAVLMFSMAGVPPLAGFW), 408-430 (LYTLSILGVLSSVVSTYYYLRIV), and 452-472 (LVMAVSTIVILAFTLIPAPLV).

The protein belongs to the complex I subunit 2 family. In terms of assembly, NDH-1 is composed of 14 different subunits. Subunits NuoA, H, J, K, L, M, N constitute the membrane sector of the complex.

It localises to the cell inner membrane. It catalyses the reaction a quinone + NADH + 5 H(+)(in) = a quinol + NAD(+) + 4 H(+)(out). Functionally, NDH-1 shuttles electrons from NADH, via FMN and iron-sulfur (Fe-S) centers, to quinones in the respiratory chain. The immediate electron acceptor for the enzyme in this species is believed to be ubiquinone. Couples the redox reaction to proton translocation (for every two electrons transferred, four hydrogen ions are translocated across the cytoplasmic membrane), and thus conserves the redox energy in a proton gradient. In Paramagnetospirillum magneticum (strain ATCC 700264 / AMB-1) (Magnetospirillum magneticum), this protein is NADH-quinone oxidoreductase subunit N.